The sequence spans 66 residues: Large ribosomal subunit protein bL35 (66 aa).

Residues 22–41 are disordered; the sequence is VMSAQRGKRHGMIKRTKKQI. A compositionally biased stretch (basic residues) spans 27 to 41; that stretch reads RGKRHGMIKRTKKQI.

Belongs to the bacterial ribosomal protein bL35 family.

This Rhodopseudomonas palustris (strain TIE-1) protein is Large ribosomal subunit protein bL35.